The chain runs to 421 residues: Tubulin gamma-3 chain (421 aa).

GTP is bound at residue 94-100 (AGGTGSG).

It belongs to the tubulin family.

Its subcellular location is the cytoplasm. It localises to the cytoskeleton. The protein resides in the microtubule organizing center. Functionally, tubulin is the major constituent of microtubules. The gamma chain is found at microtubule organizing centers (MTOC) such as the spindle poles, suggesting that it is involved in the minus-end nucleation of microtubule assembly. This Zea mays (Maize) protein is Tubulin gamma-3 chain (TUBG3).